A 618-amino-acid polypeptide reads, in one-letter code: 1-deoxy-D-xylulose-5-phosphate synthase (618 aa).

Residues H70 and 111 to 113 (GHS) contribute to the thiamine diphosphate site. Mg(2+) is bound at residue D142. Thiamine diphosphate is bound by residues 143 to 144 (GS), N171, Y278, and E360. N171 lines the Mg(2+) pocket.

This sequence belongs to the transketolase family. DXPS subfamily. As to quaternary structure, homodimer. Mg(2+) is required as a cofactor. The cofactor is thiamine diphosphate.

It catalyses the reaction D-glyceraldehyde 3-phosphate + pyruvate + H(+) = 1-deoxy-D-xylulose 5-phosphate + CO2. The protein operates within metabolic intermediate biosynthesis; 1-deoxy-D-xylulose 5-phosphate biosynthesis; 1-deoxy-D-xylulose 5-phosphate from D-glyceraldehyde 3-phosphate and pyruvate: step 1/1. Catalyzes the acyloin condensation reaction between C atoms 2 and 3 of pyruvate and glyceraldehyde 3-phosphate to yield 1-deoxy-D-xylulose-5-phosphate (DXP). This is 1-deoxy-D-xylulose-5-phosphate synthase from Helicobacter pylori (strain G27).